Consider the following 422-residue polypeptide: Putative nickel insertion protein (422 aa).

The protein belongs to the LarC family.

This Synechocystis sp. (strain ATCC 27184 / PCC 6803 / Kazusa) protein is Putative nickel insertion protein.